Here is a 290-residue protein sequence, read N- to C-terminus: Inactive tau-tubulin kinase ttbk-6 (290 aa).

In terms of domain architecture, Protein kinase spans 1–240 (MEDHVLKKLN…FWQVMENEKI (240 aa)). Disordered stretches follow at residues 244–263 (SKFDWENEEPDMSVPPAAWE) and 268–290 (RYFQSNPLEINGPPTPAEVDFVL).

Belongs to the protein kinase superfamily. CK1 Ser/Thr protein kinase family.

The polypeptide is Inactive tau-tubulin kinase ttbk-6 (Caenorhabditis elegans).